The following is a 54-amino-acid chain: Large ribosomal subunit protein bL33 (54 aa).

This sequence belongs to the bacterial ribosomal protein bL33 family.

The sequence is that of Large ribosomal subunit protein bL33 from Stenotrophomonas maltophilia (strain R551-3).